We begin with the raw amino-acid sequence, 862 residues long: Valine--tRNA ligase (862 aa).

Residues 43 to 53 (PTVSGALHVGH) carry the 'HIGH' region motif. A disordered region spans residues 459-494 (ERPILPDDAALPVDPSSDTPTGYHDSQRHQPGGFMA). Positions 574–578 (KMSKS) match the 'KMSKS' region motif. ATP is bound at residue Lys-577.

It belongs to the class-I aminoacyl-tRNA synthetase family. ValS type 2 subfamily. In terms of assembly, monomer.

It localises to the cytoplasm. The catalysed reaction is tRNA(Val) + L-valine + ATP = L-valyl-tRNA(Val) + AMP + diphosphate. Functionally, catalyzes the attachment of valine to tRNA(Val). As ValRS can inadvertently accommodate and process structurally similar amino acids such as threonine, to avoid such errors, it has a 'posttransfer' editing activity that hydrolyzes mischarged Thr-tRNA(Val) in a tRNA-dependent manner. In Salinispora arenicola (strain CNS-205), this protein is Valine--tRNA ligase.